The sequence spans 290 residues: L-cysteine S-thiosulfotransferase subunit SoxA (290 aa).

Positions 1–26 (MPRFTKTKGTLAATALGLALAGAAFA) are cleaved as a signal peptide. Residues Asp78 and Asp81 each contribute to the Zn(2+) site. A Cytochrome c domain is found at 78 to 171 (DDFDNPAMVF…DMLSLISLQS (94 aa)). Heme c-binding residues include Cys106, Cys109, His110, and Cys143. His190 serves as a coordination point for Zn(2+). Positions 206, 209, and 210 each coordinate heme c. Arg247 serves as a coordination point for substrate. Residue Cys251 coordinates heme c. Cys251 acts as the Cysteine persulfide intermediate in catalysis. Asp266 contributes to the Zn(2+) binding site.

It belongs to the SoxA family. As to quaternary structure, heterodimer of SoxA and SoxX. Requires heme c as cofactor. Zn(2+) is required as a cofactor. In terms of processing, cysteine persulfide at Cys-251.

It localises to the periplasm. It catalyses the reaction L-cysteinyl-[SoxY protein] + thiosulfate + 2 Fe(III)-[cytochrome c] = S-sulfosulfanyl-L-cysteinyl-[SoxY protein] + 2 Fe(II)-[cytochrome c] + 2 H(+). The enzyme catalyses S-sulfanyl-L-cysteinyl-[SoxY protein] + thiosulfate + 2 Fe(III)-[cytochrome c] = S-(2-sulfodisulfanyl)-L-cysteinyl-[SoxY protein] + 2 Fe(II)-[cytochrome c] + 2 H(+). In terms of biological role, C-type diheme cytochrome, which is part of the SoxAX cytochrome complex involved in sulfur oxidation. The SoxAX complex catalyzes the formation of a heterodisulfide bond between the conserved cysteine residue on a sulfur carrier SoxYZ complex subunit SoxY and thiosulfate or other inorganic sulfur substrates. This leads to the liberation of two electrons, which may be transferred from the SoxAX complex to another cytochrome c that then channels them into the respiratory electron transport chain. Some electrons may be used for reductive CO(2) fixation. This chain is L-cysteine S-thiosulfotransferase subunit SoxA, found in Paracoccus pantotrophus (Thiosphaera pantotropha).